A 504-amino-acid polypeptide reads, in one-letter code: ATP synthase subunit alpha (504 aa).

170–177 (GDRQTGKT) lines the ATP pocket.

It belongs to the ATPase alpha/beta chains family. As to quaternary structure, F-type ATPases have 2 components, CF(1) - the catalytic core - and CF(0) - the membrane proton channel. CF(1) has five subunits: alpha(3), beta(3), gamma(1), delta(1), epsilon(1). CF(0) has four main subunits: a(1), b(1), b'(1) and c(9-12).

It is found in the cellular thylakoid membrane. The catalysed reaction is ATP + H2O + 4 H(+)(in) = ADP + phosphate + 5 H(+)(out). Its function is as follows. Produces ATP from ADP in the presence of a proton gradient across the membrane. The alpha chain is a regulatory subunit. The protein is ATP synthase subunit alpha of Prochlorococcus marinus (strain NATL1A).